A 121-amino-acid chain; its full sequence is Small ribosomal subunit protein uS13 (121 aa).

The segment at 91 to 121 is disordered; it reads HRRGLPVRGQKTKNNARTRKGPVKTVANKKK.

This sequence belongs to the universal ribosomal protein uS13 family. In terms of assembly, part of the 30S ribosomal subunit. Forms a loose heterodimer with protein S19. Forms two bridges to the 50S subunit in the 70S ribosome.

In terms of biological role, located at the top of the head of the 30S subunit, it contacts several helices of the 16S rRNA. In the 70S ribosome it contacts the 23S rRNA (bridge B1a) and protein L5 of the 50S subunit (bridge B1b), connecting the 2 subunits; these bridges are implicated in subunit movement. Contacts the tRNAs in the A and P-sites. This chain is Small ribosomal subunit protein uS13, found in Staphylococcus haemolyticus (strain JCSC1435).